Consider the following 498-residue polypeptide: UDP-N-acetylmuramate--L-alanine ligase (498 aa).

133-139 (GSSGKTT) lines the ATP pocket.

This sequence belongs to the MurCDEF family.

It localises to the cytoplasm. The catalysed reaction is UDP-N-acetyl-alpha-D-muramate + L-alanine + ATP = UDP-N-acetyl-alpha-D-muramoyl-L-alanine + ADP + phosphate + H(+). It participates in cell wall biogenesis; peptidoglycan biosynthesis. In terms of biological role, cell wall formation. The sequence is that of UDP-N-acetylmuramate--L-alanine ligase from Wolbachia pipientis wMel.